The sequence spans 390 residues: uncharacterized protein (390 aa).

The next 2 helical transmembrane spans lie at 27–47 and 356–376; these read GGLI…MEWI and FGGF…LASF.

This sequence belongs to the ERGIC family.

The protein resides in the membrane. This is an uncharacterized protein from Schizosaccharomyces pombe (strain 972 / ATCC 24843) (Fission yeast).